The primary structure comprises 347 residues: Probable dual-specificity RNA methyltransferase RlmN (347 aa).

Glu91 functions as the Proton acceptor in the catalytic mechanism. The 231-residue stretch at 97 to 327 (YKYGNSICVS…ATVRREMGSD (231 aa)) folds into the Radical SAM core domain. Cys104 and Cys332 form a disulfide bridge. Cys111, Cys115, and Cys118 together coordinate [4Fe-4S] cluster. Residues 158–159 (GE), Ser190, 213–215 (SLH), and Asn289 each bind S-adenosyl-L-methionine. Cys332 (S-methylcysteine intermediate) is an active-site residue.

The protein belongs to the radical SAM superfamily. RlmN family. The cofactor is [4Fe-4S] cluster.

Its subcellular location is the cytoplasm. The enzyme catalyses adenosine(2503) in 23S rRNA + 2 reduced [2Fe-2S]-[ferredoxin] + 2 S-adenosyl-L-methionine = 2-methyladenosine(2503) in 23S rRNA + 5'-deoxyadenosine + L-methionine + 2 oxidized [2Fe-2S]-[ferredoxin] + S-adenosyl-L-homocysteine. It catalyses the reaction adenosine(37) in tRNA + 2 reduced [2Fe-2S]-[ferredoxin] + 2 S-adenosyl-L-methionine = 2-methyladenosine(37) in tRNA + 5'-deoxyadenosine + L-methionine + 2 oxidized [2Fe-2S]-[ferredoxin] + S-adenosyl-L-homocysteine. Functionally, specifically methylates position 2 of adenine 2503 in 23S rRNA and position 2 of adenine 37 in tRNAs. This Clostridium perfringens (strain 13 / Type A) protein is Probable dual-specificity RNA methyltransferase RlmN.